Reading from the N-terminus, the 101-residue chain is Venom peptide Pc (101 aa).

Residues 1–20 (MSHLRIAVIFLCTLFALTAG) form the signal peptide.

It belongs to the scorpion La1-like peptide family. In terms of processing, contains 4 disulfide bonds. In terms of tissue distribution, expressed by the venom gland.

It localises to the secreted. This chain is Venom peptide Pc, found in Pandinus cavimanus (Tanzanian red clawed scorpion).